We begin with the raw amino-acid sequence, 341 residues long: LRP2-binding protein (341 aa).

Residues 56 to 89 form a TPR repeat; it reads VQANFLLGQLFFEEGWYEDALLQFEKVKDEDNQA. Sel1-like repeat units follow at residues 90–122, 130–165, 170–203, 204–239, 240–271, and 291–326; these read LYQAGVMYYDGLGTQEDHRKGVKYMERIVTSDC, YAAAYNLGRAYFEGYGIPHSDKEAERWWLFAADNGN, LKAQSVLGMYYSSPPNVDLQKAFLWHSEACGNGS, LESQGALGVMYLYGNGIKKNVQAAIECLKEAAERGN, VYAQGHLVSCYYQRKLYTKAVELAKKIVSHDN, and AIATFYFARCLHLGLGIKQDSTAAKQLYSKAAQLDA.

It localises to the cytoplasm. May act as an adapter that regulates LRP2 function. The sequence is that of LRP2-binding protein (lrp2bp) from Xenopus laevis (African clawed frog).